Consider the following 188-residue polypeptide: Guanylate kinase (188 aa).

Residues 2 to 183 form the Guanylate kinase-like domain; the sequence is TKLIIISAPS…CVEQIRKAIA (182 aa). 9–16 contacts ATP; that stretch reads APSGTGKS.

This sequence belongs to the guanylate kinase family.

The protein localises to the cytoplasm. It carries out the reaction GMP + ATP = GDP + ADP. Functionally, essential for recycling GMP and indirectly, cGMP. This chain is Guanylate kinase, found in Porphyromonas gingivalis (strain ATCC BAA-308 / W83).